The chain runs to 440 residues: Serine hydroxymethyltransferase (440 aa).

(6S)-5,6,7,8-tetrahydrofolate is bound by residues leucine 119 and 123–125; that span reads GHL. At lysine 228 the chain carries N6-(pyridoxal phosphate)lysine. Residue 370-372 coordinates (6S)-5,6,7,8-tetrahydrofolate; the sequence is SPF.

The protein belongs to the SHMT family. As to quaternary structure, homodimer. Pyridoxal 5'-phosphate serves as cofactor.

It localises to the cytoplasm. The catalysed reaction is (6R)-5,10-methylene-5,6,7,8-tetrahydrofolate + glycine + H2O = (6S)-5,6,7,8-tetrahydrofolate + L-serine. It participates in one-carbon metabolism; tetrahydrofolate interconversion. It functions in the pathway amino-acid biosynthesis; glycine biosynthesis; glycine from L-serine: step 1/1. Its function is as follows. Catalyzes the reversible interconversion of serine and glycine with tetrahydrofolate (THF) serving as the one-carbon carrier. This reaction serves as the major source of one-carbon groups required for the biosynthesis of purines, thymidylate, methionine, and other important biomolecules. Also exhibits THF-independent aldolase activity toward beta-hydroxyamino acids, producing glycine and aldehydes, via a retro-aldol mechanism. This is Serine hydroxymethyltransferase from Chlorobaculum tepidum (strain ATCC 49652 / DSM 12025 / NBRC 103806 / TLS) (Chlorobium tepidum).